Consider the following 282-residue polypeptide: uncharacterized protein (282 aa).

The next 5 helical transmembrane spans lie at 9-29, 43-63, 123-143, 158-178, and 232-252; these read LLKI…APHG, ISGR…FLYA, VFVS…LYLV, YIGM…DNIL, and LAAG…ILLM.

The protein belongs to the steroid 5-alpha reductase family.

It is found in the endoplasmic reticulum membrane. This is an uncharacterized protein from Schizosaccharomyces pombe (strain 972 / ATCC 24843) (Fission yeast).